The primary structure comprises 279 residues: Topoisomerase I damage affected protein 4 (279 aa).

At 1 to 32 (MNANSTTTAIGLTSPFEKLSFFPHSSNLILAH) the chain is on the extracellular side. A helical transmembrane segment spans residues 33-53 (LHEIIFSFVFYQLAFSVVAPF). At 54–79 (LNKVVFRKHYTTIRDPLLKIDFNVHT) the chain is on the cytoplasmic side. Residues 70–271 (LLKIDFNVHT…MIRIAKKLAK (202 aa)) enclose the TLC domain. The helical transmembrane segment at 80-100 (VSMIQAVVSNTVLLPTLTTPM) threads the bilayer. The Extracellular segment spans residues 101 to 110 (HYNVVTYTDS). The chain crosses the membrane as a helical span at residues 111 to 131 (YSSMVSSLSAGYFIWDLTMCV). The Cytoplasmic portion of the chain corresponds to 132–135 (RYFK). The helical transmembrane segment at 136–156 (LYGLEFTGHAIGSVYVMLLSL) threads the bilayer. The Extracellular segment spans residues 157-162 (RPFCQP). Residues 163-183 (WIGRFLIYEASTPFVNINWFI) traverse the membrane as a helical segment. Residues 184-192 (MQCNAKSKN) lie on the Cytoplasmic side of the membrane. Residues 193–213 (SIPLWFNVVNGLLLMTVFFVV) traverse the membrane as a helical segment. The Extracellular segment spans residues 214 to 238 (RICWGSIASALLFRQMWKVRDELPK). The helical transmembrane segment at 239 to 259 (FSAVTMMSLNIFMNLLNVLWF) threads the bilayer. The Cytoplasmic segment spans residues 260 to 279 (KKMIRIAKKLAKPAPTSKLD).

Belongs to the TMEM56 family.

The protein localises to the membrane. This is Topoisomerase I damage affected protein 4 (TDA4) from Saccharomyces cerevisiae (strain ATCC 204508 / S288c) (Baker's yeast).